The sequence spans 77 residues: Exodeoxyribonuclease 7 small subunit (77 aa).

The protein belongs to the XseB family. Heterooligomer composed of large and small subunits.

Its subcellular location is the cytoplasm. The catalysed reaction is Exonucleolytic cleavage in either 5'- to 3'- or 3'- to 5'-direction to yield nucleoside 5'-phosphates.. In terms of biological role, bidirectionally degrades single-stranded DNA into large acid-insoluble oligonucleotides, which are then degraded further into small acid-soluble oligonucleotides. In Carboxydothermus hydrogenoformans (strain ATCC BAA-161 / DSM 6008 / Z-2901), this protein is Exodeoxyribonuclease 7 small subunit.